Here is a 139-residue protein sequence, read N- to C-terminus: UDP-glucose 4-epimerase (139 aa).

Residues 11–12 (YI), 31–36 (DNLCNS), 58–59 (DI), 80–84 (FAGLK), N99, and S124 contribute to the NAD(+) site. S124 lines the substrate pocket. Y136 serves as the catalytic Proton acceptor.

Belongs to the NAD(P)-dependent epimerase/dehydratase family. Homodimer. NAD(+) is required as a cofactor.

It carries out the reaction UDP-alpha-D-glucose = UDP-alpha-D-galactose. The protein operates within carbohydrate metabolism; galactose metabolism. Functionally, involved in the metabolism of galactose. Catalyzes the conversion of UDP-galactose (UDP-Gal) to UDP-glucose (UDP-Glc) through a mechanism involving the transient reduction of NAD. This Klebsiella pneumoniae protein is UDP-glucose 4-epimerase (galE).